The sequence spans 302 residues: Monopolin complex subunit MAM1 (302 aa).

2 disordered regions span residues 53–83 (YHKE…QNNV) and 257–276 (TSEN…SKGK). The segment covering 257-268 (TSENPFSSSPNT) has biased composition (polar residues).

As to quaternary structure, component of the monopolin complex composed of at least CSM1, LRS4 and MAM1. The complex associates with the kinetochore during late pachytene. In terms of processing, phosphorylated by CDC5. This phosphorylation is required for the location to the kinetochores during late pachytene.

It is found in the nucleus. Component of the monopolin complex which promotes monoorientation during meiosis I, required for chromosome segregation during meiosis. This Saccharomyces cerevisiae (strain ATCC 204508 / S288c) (Baker's yeast) protein is Monopolin complex subunit MAM1 (MAM1).